The following is a 70-amino-acid chain: uncharacterized protein (70 aa).

An N-terminal signal peptide occupies residues 1 to 16 (MKLLLVLITLIIAALA).

This is an uncharacterized protein from Orgyia pseudotsugata (Douglas-fir tussock moth).